Reading from the N-terminus, the 311-residue chain is Putative HTH-type transcriptional regulatory protein MTH_967 (311 aa).

Positions 134 to 192 (LREVREEYNLSLKDLADLAHVSRKTIYKYENGLARASAETAMILEEILNIRITLSIDIF) constitute an HTH cro/C1-type domain. The H-T-H motif DNA-binding region spans 145–164 (LKDLADLAHVSRKTIYKYEN).

The chain is Putative HTH-type transcriptional regulatory protein MTH_967 from Methanothermobacter thermautotrophicus (strain ATCC 29096 / DSM 1053 / JCM 10044 / NBRC 100330 / Delta H) (Methanobacterium thermoautotrophicum).